A 114-amino-acid chain; its full sequence is Putative pterin-4-alpha-carbinolamine dehydratase (114 aa).

This sequence belongs to the pterin-4-alpha-carbinolamine dehydratase family.

The catalysed reaction is (4aS,6R)-4a-hydroxy-L-erythro-5,6,7,8-tetrahydrobiopterin = (6R)-L-erythro-6,7-dihydrobiopterin + H2O. This is Putative pterin-4-alpha-carbinolamine dehydratase from Pseudoalteromonas translucida (strain TAC 125).